A 425-amino-acid polypeptide reads, in one-letter code: Serine hydroxymethyltransferase (425 aa).

(6S)-5,6,7,8-tetrahydrofolate-binding positions include Leu-122 and 126 to 128 (GHL). The residue at position 231 (Lys-231) is an N6-(pyridoxal phosphate)lysine. 355–357 (SPF) serves as a coordination point for (6S)-5,6,7,8-tetrahydrofolate.

This sequence belongs to the SHMT family. In terms of assembly, homodimer. Requires pyridoxal 5'-phosphate as cofactor.

It localises to the cytoplasm. The enzyme catalyses (6R)-5,10-methylene-5,6,7,8-tetrahydrofolate + glycine + H2O = (6S)-5,6,7,8-tetrahydrofolate + L-serine. It functions in the pathway one-carbon metabolism; tetrahydrofolate interconversion. Its pathway is amino-acid biosynthesis; glycine biosynthesis; glycine from L-serine: step 1/1. Its function is as follows. Catalyzes the reversible interconversion of serine and glycine with tetrahydrofolate (THF) serving as the one-carbon carrier. This reaction serves as the major source of one-carbon groups required for the biosynthesis of purines, thymidylate, methionine, and other important biomolecules. Also exhibits THF-independent aldolase activity toward beta-hydroxyamino acids, producing glycine and aldehydes, via a retro-aldol mechanism. This chain is Serine hydroxymethyltransferase, found in Rippkaea orientalis (strain PCC 8801 / RF-1) (Cyanothece sp. (strain PCC 8801)).